A 217-amino-acid chain; its full sequence is Large ribosomal subunit protein uL3 (217 aa).

This sequence belongs to the universal ribosomal protein uL3 family. Part of the 50S ribosomal subunit. Forms a cluster with proteins L14 and L19.

Its function is as follows. One of the primary rRNA binding proteins, it binds directly near the 3'-end of the 23S rRNA, where it nucleates assembly of the 50S subunit. This Mycobacterium ulcerans (strain Agy99) protein is Large ribosomal subunit protein uL3.